The sequence spans 76 residues: Short coiled-coil protein B (76 aa).

Positions 6-52 form a coiled coil; it reads ENQVELEEKTRLINQVLELQNTLEDLSARVDAVKEENLKLKSENQVL.

It belongs to the SCOC family.

It localises to the golgi apparatus membrane. The protein resides in the golgi apparatus. The protein localises to the trans-Golgi network. It is found in the cytoplasm. Its subcellular location is the cytosol. Positive regulator of amino acid starvation-induced autophagy. The chain is Short coiled-coil protein B (scocb) from Danio rerio (Zebrafish).